A 390-amino-acid polypeptide reads, in one-letter code: tRNA-specific 2-thiouridylase MnmA (390 aa).

ATP-binding positions include 20–27 and Leu-46; that span reads AMSGGVDS. The active-site Nucleophile is the Cys-114. A disulfide bridge links Cys-114 with Cys-211. Residue Gly-138 participates in ATP binding. Residues 161-163 form an interaction with tRNA region; it reads RDQ. Cys-211 serves as the catalytic Cysteine persulfide intermediate.

This sequence belongs to the MnmA/TRMU family.

Its subcellular location is the cytoplasm. The catalysed reaction is S-sulfanyl-L-cysteinyl-[protein] + uridine(34) in tRNA + AH2 + ATP = 2-thiouridine(34) in tRNA + L-cysteinyl-[protein] + A + AMP + diphosphate + H(+). Catalyzes the 2-thiolation of uridine at the wobble position (U34) of tRNA, leading to the formation of s(2)U34. The protein is tRNA-specific 2-thiouridylase MnmA of Azorhizobium caulinodans (strain ATCC 43989 / DSM 5975 / JCM 20966 / LMG 6465 / NBRC 14845 / NCIMB 13405 / ORS 571).